The sequence spans 145 residues: Small ribosomal subunit protein eS19 (145 aa).

This sequence belongs to the eukaryotic ribosomal protein eS19 family. As to quaternary structure, part of the 30S ribosomal subunit.

Functionally, may be involved in maturation of the 30S ribosomal subunit. This chain is Small ribosomal subunit protein eS19, found in Methanothermobacter thermautotrophicus (strain ATCC 29096 / DSM 1053 / JCM 10044 / NBRC 100330 / Delta H) (Methanobacterium thermoautotrophicum).